A 38-amino-acid chain; its full sequence is Large ribosomal subunit protein bL36 (38 aa).

The protein belongs to the bacterial ribosomal protein bL36 family.

The protein is Large ribosomal subunit protein bL36 of Ectopseudomonas mendocina (strain ymp) (Pseudomonas mendocina).